Reading from the N-terminus, the 523-residue chain is Glutamate--cysteine ligase, chloroplastic (523 aa).

An intrachain disulfide couples C187 to C407.

Belongs to the carboxylate-amine ligase family. Glutamate--cysteine ligase type 2 subfamily. Homodimer or monomer when oxidized or reduced, respectively. The Cys-187-Cys-407 disulfide bridge is known to modulate the enzyme activity according to the redox status. The oxidized form constitutes the active enzyme.

It is found in the plastid. The protein resides in the chloroplast. The enzyme catalyses L-cysteine + L-glutamate + ATP = gamma-L-glutamyl-L-cysteine + ADP + phosphate + H(+). The protein operates within sulfur metabolism; glutathione biosynthesis; glutathione from L-cysteine and L-glutamate: step 1/2. The protein is Glutamate--cysteine ligase, chloroplastic (GSH1) of Solanum lycopersicum (Tomato).